Here is a 389-residue protein sequence, read N- to C-terminus: Protein WALLS ARE THIN 1 (389 aa).

10 helical membrane passes run 18–38 (LQLH…HVVS), 49–69 (LVFP…FAYF), 76–96 (PAIT…GITA), 111–131 (TFAS…AALL), 143–163 (GISK…ITLY), 198–218 (WTLG…WLVF), 230–250 (LSVT…IAAF), 266–286 (LFTI…VQIW), 294–314 (VFVA…ASIA), and 319–339 (FYLG…FVLY). EamA domains are found at residues 32 to 161 (AGFH…SVIT) and 210 to 339 (LSWS…FVLY). Phosphoserine is present on serine 372.

This sequence belongs to the drug/metabolite transporter (DMT) superfamily. Plant drug/metabolite exporter (P-DME) (TC 2.A.7.4) family. In terms of tissue distribution, mostly expressed in stems and hypocotyls, also present in seedlings, root, leaves, flowers and siliques. Ubiquitous, mostly expressed in vascular tissues and secondary wall-forming cells, including developing xylem vessels and fibers.

It localises to the vacuole membrane. Functionally, required for secondary wall formation in fibers, especially in short days conditions. Promotes indole metabolism and transport (e.g. tryptophan, neoglucobrassicin and auxin (indole-3-acetic acid)). May prevent salicylic-acid (SA) accumulation. This is Protein WALLS ARE THIN 1 (WAT1) from Arabidopsis thaliana (Mouse-ear cress).